The chain runs to 61 residues: Large ribosomal subunit protein uL30 (61 aa).

It belongs to the universal ribosomal protein uL30 family. As to quaternary structure, part of the 50S ribosomal subunit.

This Neisseria meningitidis serogroup C (strain 053442) protein is Large ribosomal subunit protein uL30.